A 348-amino-acid polypeptide reads, in one-letter code: Phosphoribosylformylglycinamidine cyclo-ligase (348 aa).

This sequence belongs to the AIR synthase family.

Its subcellular location is the cytoplasm. The enzyme catalyses 2-formamido-N(1)-(5-O-phospho-beta-D-ribosyl)acetamidine + ATP = 5-amino-1-(5-phospho-beta-D-ribosyl)imidazole + ADP + phosphate + H(+). The protein operates within purine metabolism; IMP biosynthesis via de novo pathway; 5-amino-1-(5-phospho-D-ribosyl)imidazole from N(2)-formyl-N(1)-(5-phospho-D-ribosyl)glycinamide: step 2/2. The protein is Phosphoribosylformylglycinamidine cyclo-ligase of Ruegeria pomeroyi (strain ATCC 700808 / DSM 15171 / DSS-3) (Silicibacter pomeroyi).